Here is a 274-residue protein sequence, read N- to C-terminus: Large ribosomal subunit protein uL2 (274 aa).

The interval 222-257 (GVAMNPVDHPHGGGEGRTSGGRHPVSPWGVPTKGYK) is disordered.

The protein belongs to the universal ribosomal protein uL2 family. Part of the 50S ribosomal subunit. Forms a bridge to the 30S subunit in the 70S ribosome.

Functionally, one of the primary rRNA binding proteins. Required for association of the 30S and 50S subunits to form the 70S ribosome, for tRNA binding and peptide bond formation. It has been suggested to have peptidyltransferase activity; this is somewhat controversial. Makes several contacts with the 16S rRNA in the 70S ribosome. The sequence is that of Large ribosomal subunit protein uL2 from Nitrosococcus oceani (strain ATCC 19707 / BCRC 17464 / JCM 30415 / NCIMB 11848 / C-107).